Reading from the N-terminus, the 328-residue chain is Sterol demethylase protein B (328 aa).

Belongs to the NAD(P)-dependent epimerase/dehydratase family.

It catalyses the reaction a 3beta-hydroxy-4alpha-methylsteroid-4beta-carboxylate + NAD(+) = a 4alpha-methyl-3-oxosteroid + CO2 + NADH. It carries out the reaction a 3beta-hydroxy-4alpha-methylsteroid-4beta-carboxylate + NADP(+) = a 4alpha-methyl-3-oxosteroid + CO2 + NADPH. The enzyme catalyses 4beta-carboxy-4alpha-methyl-5alpha-cholesta-8,24-dien-3beta-ol + NAD(+) = 3-dehydro-4alpha-methylzymosterol + CO2 + NADH. The catalysed reaction is 4beta-carboxy-4alpha-methyl-5alpha-cholesta-8,24-dien-3beta-ol + NADP(+) = 3-dehydro-4alpha-methylzymosterol + CO2 + NADPH. It catalyses the reaction 3-dehydro-4alpha-methylzymosterol + NADPH + H(+) = 4alpha-methylzymosterol + NADP(+). It participates in steroid biosynthesis; sterol biosynthesis. Participates in the biosynthesis of bacterial sterols. Together with SdmA, removes one methyl group from the C-4 position of 4,4-dimethylated steroid molecules. SdmB catalyzes an oxidative decarboxylation that results in reduction of the 3beta-hydroxy group at the C-3 carbon to an oxo group. It also functions as a ketoreductase that converts the C-3 oxo group back to a hydroxyl group after C-4 demethylation. The sequence is that of Sterol demethylase protein B from Methylococcus capsulatus (strain ATCC 33009 / NCIMB 11132 / Bath).